We begin with the raw amino-acid sequence, 511 residues long: UDP-N-acetylmuramoyl-L-alanyl-D-glutamate--2,6-diaminopimelate ligase (511 aa).

Ser30 contacts UDP-N-acetyl-alpha-D-muramoyl-L-alanyl-D-glutamate. An ATP-binding site is contributed by 110-116; the sequence is GTNGKTT. UDP-N-acetyl-alpha-D-muramoyl-L-alanyl-D-glutamate-binding positions include 152–153, Ser179, Gln185, and Arg187; that span reads TT. Position 219 is an N6-carboxylysine (Lys219). Residues Arg385, 409–412, Gly476, and Glu480 each bind meso-2,6-diaminopimelate; that span reads DNPR. The Meso-diaminopimelate recognition motif signature appears at 409 to 412; the sequence is DNPR.

Belongs to the MurCDEF family. MurE subfamily. It depends on Mg(2+) as a cofactor. Post-translationally, carboxylation is probably crucial for Mg(2+) binding and, consequently, for the gamma-phosphate positioning of ATP.

It localises to the cytoplasm. The catalysed reaction is UDP-N-acetyl-alpha-D-muramoyl-L-alanyl-D-glutamate + meso-2,6-diaminopimelate + ATP = UDP-N-acetyl-alpha-D-muramoyl-L-alanyl-gamma-D-glutamyl-meso-2,6-diaminopimelate + ADP + phosphate + H(+). It participates in cell wall biogenesis; peptidoglycan biosynthesis. Its function is as follows. Catalyzes the addition of meso-diaminopimelic acid to the nucleotide precursor UDP-N-acetylmuramoyl-L-alanyl-D-glutamate (UMAG) in the biosynthesis of bacterial cell-wall peptidoglycan. This chain is UDP-N-acetylmuramoyl-L-alanyl-D-glutamate--2,6-diaminopimelate ligase, found in Geobacter metallireducens (strain ATCC 53774 / DSM 7210 / GS-15).